The sequence spans 35 residues: Kappa-theraphotoxin-Tb1b (35 aa).

3 disulfide bridges follow: cysteine 3-cysteine 18, cysteine 10-cysteine 23, and cysteine 17-cysteine 30.

Belongs to the neurotoxin 10 (Hwtx-1) family. 58 subfamily. In terms of assembly, monomer. As to expression, expressed by the venom gland.

It localises to the secreted. In terms of biological role, low-affinity blocker of Kv4.2/KCND2 voltage-gated potassium channels. Is presumed to shift the voltage-dependence of channel activation to more depolarized potentials and to bind to the S3-S4 linker region of the voltage sensor domain. The polypeptide is Kappa-theraphotoxin-Tb1b (Theraphosa blondi (Goliath birdeating spider)).